Reading from the N-terminus, the 301-residue chain is ATP synthase gamma chain (301 aa).

This sequence belongs to the ATPase gamma chain family. In terms of assembly, F-type ATPases have 2 components, CF(1) - the catalytic core - and CF(0) - the membrane proton channel. CF(1) has five subunits: alpha(3), beta(3), gamma(1), delta(1), epsilon(1). CF(0) has three main subunits: a, b and c.

The protein localises to the cell inner membrane. In terms of biological role, produces ATP from ADP in the presence of a proton gradient across the membrane. The gamma chain is believed to be important in regulating ATPase activity and the flow of protons through the CF(0) complex. The polypeptide is ATP synthase gamma chain (Helicobacter pylori (strain Shi470)).